We begin with the raw amino-acid sequence, 268 residues long: Enoyl-[acyl-carrier-protein] reductase [NADH] 2 (268 aa).

NAD(+)-binding positions include Gly14, 20–21, Gln41, 65–66, and Ile93; these read SI and DV. Active-site proton acceptor residues include Tyr146 and Tyr156. Residues Lys163 and 192 to 196 each bind NAD(+); that span reads IRTLA.

This sequence belongs to the short-chain dehydrogenases/reductases (SDR) family. FabI subfamily.

The protein localises to the cell inner membrane. It carries out the reaction a 2,3-saturated acyl-[ACP] + NAD(+) = a (2E)-enoyl-[ACP] + NADH + H(+). It participates in lipid metabolism; fatty acid biosynthesis. The sequence is that of Enoyl-[acyl-carrier-protein] reductase [NADH] 2 (fabI2) from Rhizobium meliloti (strain 1021) (Ensifer meliloti).